A 351-amino-acid polypeptide reads, in one-letter code: Hepatocyte nuclear factor 3-gamma (351 aa).

Residues 52–73 (PGGLPASPLPTGPLAPPAPTAP) are compositionally biased toward pro residues. The interval 52-94 (PGGLPASPLPTGPLAPPAPTAPLGPTFPGLGASTGGGSSSGYG) is disordered. A compositionally biased stretch (gly residues) spans 83–94 (ASTGGGSSSGYG). Positions 118–212 (KPPYSYISLI…ENGCYLRRQK (95 aa)) form a DNA-binding region, fork-head. The tract at residues 218-275 (EKVKKGGGGSSASRNSAGSASTATAPAATVASTPQPQPPPPEPEAQGGDEVGALDCGS) is disordered. Positions 228–251 (SASRNSAGSASTATAPAATVASTP) are enriched in low complexity.

It is found in the nucleus. In terms of biological role, transcription activator for a number of liver genes such as AFP, albumin, tyrosine aminotransferase, PEPCK, etc. Interacts with the cis-acting regulatory regions of these genes. This Bos taurus (Bovine) protein is Hepatocyte nuclear factor 3-gamma (FOXA3).